We begin with the raw amino-acid sequence, 172 residues long: Large ribosomal subunit protein uL10 (172 aa).

The protein belongs to the universal ribosomal protein uL10 family. In terms of assembly, part of the ribosomal stalk of the 50S ribosomal subunit. The N-terminus interacts with L11 and the large rRNA to form the base of the stalk. The C-terminus forms an elongated spine to which L12 dimers bind in a sequential fashion forming a multimeric L10(L12)X complex.

Forms part of the ribosomal stalk, playing a central role in the interaction of the ribosome with GTP-bound translation factors. The sequence is that of Large ribosomal subunit protein uL10 from Chlorobium phaeovibrioides (strain DSM 265 / 1930) (Prosthecochloris vibrioformis (strain DSM 265)).